Consider the following 150-residue polypeptide: Ribonuclease pancreatic delta-type (150 aa).

Positions 1 to 25 (MGLEKSLILFSLLVLVLGWVQPSLG) are cleaved as a signal peptide. Arginine 35 contacts substrate. Histidine 37 functions as the Proton acceptor in the catalytic mechanism. 4 disulfides stabilise this stretch: cysteine 51-cysteine 110, cysteine 65-cysteine 121, cysteine 83-cysteine 136, and cysteine 90-cysteine 98. Residues 66–70 (KRVNT), lysine 91, and arginine 111 each bind substrate. Histidine 145 functions as the Proton donor in the catalytic mechanism.

It belongs to the pancreatic ribonuclease family. Monomer.

It localises to the secreted. The enzyme catalyses an [RNA] containing cytidine + H2O = an [RNA]-3'-cytidine-3'-phosphate + a 5'-hydroxy-ribonucleotide-3'-[RNA].. It carries out the reaction an [RNA] containing uridine + H2O = an [RNA]-3'-uridine-3'-phosphate + a 5'-hydroxy-ribonucleotide-3'-[RNA].. Endonuclease that catalyzes the cleavage of RNA on the 3' side of pyrimidine nucleotides. Acts on single-stranded and double-stranded RNA. The protein is Ribonuclease pancreatic delta-type of Rattus exulans (Polynesian rat).